The primary structure comprises 136 residues: UPF0102 protein BBta_0181 (136 aa).

It belongs to the UPF0102 family.

The chain is UPF0102 protein BBta_0181 from Bradyrhizobium sp. (strain BTAi1 / ATCC BAA-1182).